The primary structure comprises 94 residues: MLQSNEYFSGKVKSIGFSSSSTGRASVGVMVEGEYTFSTAEPEEMTVISGALNVLLPDATDWQVYEAGSVFNVPGHSEFHLQVAEPTSYLCRYL.

The protein belongs to the nucleoside phosphorylase PpnP family.

It carries out the reaction a purine D-ribonucleoside + phosphate = a purine nucleobase + alpha-D-ribose 1-phosphate. The enzyme catalyses adenosine + phosphate = alpha-D-ribose 1-phosphate + adenine. The catalysed reaction is cytidine + phosphate = cytosine + alpha-D-ribose 1-phosphate. It catalyses the reaction guanosine + phosphate = alpha-D-ribose 1-phosphate + guanine. It carries out the reaction inosine + phosphate = alpha-D-ribose 1-phosphate + hypoxanthine. The enzyme catalyses thymidine + phosphate = 2-deoxy-alpha-D-ribose 1-phosphate + thymine. The catalysed reaction is uridine + phosphate = alpha-D-ribose 1-phosphate + uracil. It catalyses the reaction xanthosine + phosphate = alpha-D-ribose 1-phosphate + xanthine. Functionally, catalyzes the phosphorolysis of diverse nucleosides, yielding D-ribose 1-phosphate and the respective free bases. Can use uridine, adenosine, guanosine, cytidine, thymidine, inosine and xanthosine as substrates. Also catalyzes the reverse reactions. This Escherichia coli (strain ATCC 8739 / DSM 1576 / NBRC 3972 / NCIMB 8545 / WDCM 00012 / Crooks) protein is Pyrimidine/purine nucleoside phosphorylase.